Consider the following 365-residue polypeptide: tRNA-specific 2-thiouridylase MnmA (365 aa).

ATP is bound by residues 14-21 (AMSGGVDS) and leucine 40. The active-site Nucleophile is the cysteine 108. The cysteines at positions 108 and 204 are disulfide-linked. Position 132 (glycine 132) interacts with ATP. The interaction with tRNA stretch occupies residues 154-156 (KDQ). The Cysteine persulfide intermediate role is filled by cysteine 204.

This sequence belongs to the MnmA/TRMU family.

It is found in the cytoplasm. The catalysed reaction is S-sulfanyl-L-cysteinyl-[protein] + uridine(34) in tRNA + AH2 + ATP = 2-thiouridine(34) in tRNA + L-cysteinyl-[protein] + A + AMP + diphosphate + H(+). In terms of biological role, catalyzes the 2-thiolation of uridine at the wobble position (U34) of tRNA, leading to the formation of s(2)U34. The protein is tRNA-specific 2-thiouridylase MnmA of Rickettsia rickettsii (strain Iowa).